We begin with the raw amino-acid sequence, 198 residues long: N-acetyltransferase 9-like protein (198 aa).

One can recognise an N-acetyltransferase domain in the interval 34-178; the sequence is EEIRRLTGSE…KEITMELPGE (145 aa).

This sequence belongs to the acetyltransferase family. GNAT subfamily.

The chain is N-acetyltransferase 9-like protein from Caenorhabditis briggsae.